Reading from the N-terminus, the 53-residue chain is uncharacterized protein (53 aa).

Residues C26 to F46 form a helical membrane-spanning segment.

It belongs to the plectrovirus ORF11 family.

The protein localises to the host membrane. This is an uncharacterized protein from Spiroplasma virus SpV1-R8A2 B (SpV1).